Consider the following 565-residue polypeptide: Mitochondrial distribution and morphology protein 34 (565 aa).

The SMP-LTD domain occupies 1-208 (MAFNFNWSPL…VPEYRDRESE (208 aa)). A compositionally biased stretch (polar residues) spans 209-220 (SVNTLDLSSESG). 3 disordered regions span residues 209–241 (SVNT…GNAL), 347–463 (FGSY…SRSA), and 533–565 (MQEQ…AYGH). Over residues 353-367 (PGRHSRSHTKKRKKR) the composition is skewed to basic residues. Over residues 368-378 (VVDLRRPKTTD) the composition is skewed to basic and acidic residues. The segment covering 382–391 (SVSGDSVFSS) has biased composition (low complexity). Composition is skewed to polar residues over residues 392–402 (ENATSAPTIFS) and 439–463 (QGDQ…SRSA).

The protein belongs to the MDM34 family. As to quaternary structure, component of the ER-mitochondria encounter structure (ERMES) or MDM complex, composed of mmm1, mdm10, mdm12 and mdm34.

The protein localises to the mitochondrion outer membrane. In terms of biological role, component of the ERMES/MDM complex, which serves as a molecular tether to connect the endoplasmic reticulum (ER) and mitochondria. Components of this complex are involved in the control of mitochondrial shape and protein biogenesis, and function in nonvesicular lipid trafficking between the ER and mitochondria. Mdm34 is required for the interaction of the ER-resident membrane protein mmm1 and the outer mitochondrial membrane-resident beta-barrel protein mdm10. The protein is Mitochondrial distribution and morphology protein 34 of Talaromyces marneffei (strain ATCC 18224 / CBS 334.59 / QM 7333) (Penicillium marneffei).